Reading from the N-terminus, the 212-residue chain is Outer-membrane lipoprotein carrier protein (212 aa).

An N-terminal signal peptide occupies residues 1–29 (MSSARRRALGFSFQALLLCAAGWHGAAQA).

It belongs to the LolA family. Monomer.

It is found in the periplasm. In terms of biological role, participates in the translocation of lipoproteins from the inner membrane to the outer membrane. Only forms a complex with a lipoprotein if the residue after the N-terminal Cys is not an aspartate (The Asp acts as a targeting signal to indicate that the lipoprotein should stay in the inner membrane). The polypeptide is Outer-membrane lipoprotein carrier protein (Leptothrix cholodnii (strain ATCC 51168 / LMG 8142 / SP-6) (Leptothrix discophora (strain SP-6))).